A 362-amino-acid chain; its full sequence is Acetylajmalan esterase 2 (362 aa).

A signal peptide spans 1-23; that stretch reads MGFAARPFHIVFSLFVLAGATQA. Serine 38 serves as the catalytic Nucleophile. N-linked (GlcNAc...) asparagine glycosylation is found at asparagine 100, asparagine 118, asparagine 151, and asparagine 202. Active-site residues include aspartate 335 and histidine 338.

The protein belongs to the 'GDSL' lipolytic enzyme family. As to expression, confined to roots.

The enzyme catalyses 17-O-acetylnorajmaline + H2O = norajmaline + acetate + H(+). The catalysed reaction is 17-O-acetylajmaline + H2O = ajmaline + acetate + H(+). Its pathway is alkaloid biosynthesis; ajmaline biosynthesis. Its function is as follows. Acetylesterase involved in the biosynthesis of ajmaline-type monoterpenoid indole alkaloids (MIAs) natural products, important plant-derived pharmaceuticals used in the therapy of heart disorders. Deacetylates 17-O-acetylnorajmaline to produce norajmaline. May also catalyze the conversion of 17-O-acetylajmaline to ajmaline. This Rauvolfia serpentina (Serpentine wood) protein is Acetylajmalan esterase 2.